A 143-amino-acid chain; its full sequence is MRCLLLLLLVPVPGAKVFERCEWARLLKRNGMSNYRGISLADWVCLSQWESSYNTRATNRNTDGSTDYGIFQINSRWWCDNGQTPTSNACGISCSALLTDDVGAAIICAKHVVRDPNGIGAWVAWKRHCQGQDLSSYVAGCGV.

The signal sequence occupies residues 1–15 (MRCLLLLLLVPVPGA). Residues 16–143 (KVFERCEWAR…LSSYVAGCGV (128 aa)) form the C-type lysozyme domain. Cystine bridges form between C21–C141, C45–C129, C79–C94, and C90–C108. Catalysis depends on residues E50 and D67.

It belongs to the glycosyl hydrolase 22 family. As to quaternary structure, monomer.

It is found in the secreted. It carries out the reaction Hydrolysis of (1-&gt;4)-beta-linkages between N-acetylmuramic acid and N-acetyl-D-glucosamine residues in a peptidoglycan and between N-acetyl-D-glucosamine residues in chitodextrins.. In terms of biological role, lysozymes have primarily a bacteriolytic function; those in tissues and body fluids are associated with the monocyte-macrophage system and enhance the activity of immunoagents. In Scophthalmus maximus (Turbot), this protein is Lysozyme C (lys).